A 356-amino-acid chain; its full sequence is Cyanide hydratase (356 aa).

A CN hydrolase domain is found at 8–287 (YKAAAVNAEP…EGLLFVDIDL (280 aa)). The active-site Proton acceptor is the Glu-48. Residue Lys-130 is part of the active site. Cys-165 serves as the catalytic Nucleophile.

This sequence belongs to the carbon-nitrogen hydrolase superfamily. Nitrilase family. In terms of assembly, oligomer of dimers, forming left-handed helical fibers.

The enzyme catalyses formamide = hydrogen cyanide + H2O. Functionally, catalyzes the hydration of cyanide to formamide. Degradation of cyanide may be important for plant pathogenic fungi in infection of cyanogenic plants. Can also transform some nitriles like 2-cyanopyridine and fumaronitrile. This chain is Cyanide hydratase, found in Aspergillus niger.